The sequence spans 118 residues: Ribonuclease P protein component (118 aa).

The protein belongs to the RnpA family. As to quaternary structure, consists of a catalytic RNA component (M1 or rnpB) and a protein subunit.

The catalysed reaction is Endonucleolytic cleavage of RNA, removing 5'-extranucleotides from tRNA precursor.. Its function is as follows. RNaseP catalyzes the removal of the 5'-leader sequence from pre-tRNA to produce the mature 5'-terminus. It can also cleave other RNA substrates such as 4.5S RNA. The protein component plays an auxiliary but essential role in vivo by binding to the 5'-leader sequence and broadening the substrate specificity of the ribozyme. The sequence is that of Ribonuclease P protein component from Desulfatibacillum aliphaticivorans.